Here is a 468-residue protein sequence, read N- to C-terminus: Nucleoprotein (468 aa).

The disordered stretch occupies residues 1 to 64; it reads MSGRNRSRSG…KPKAAPPQNV (64 aa). Basic and acidic residues predominate over residues 18–33; it reads FKQESDGSDSESERRN. The segment at 48–193 is RNA-binding; that stretch reads GSAPKPEKPK…AEGRGSRGNS (146 aa). Positions 62–186 constitute a CoV N NTD domain; sequence QNVSWFAPLV…GIPKGFYAEG (125 aa). Residues arginine 106, arginine 120, and arginine 162 each coordinate RNA. At serine 165 the chain carries Phosphoserine; by host. 3 disordered regions span residues 181 to 228, 373 to 399, and 419 to 468; these read GFYA…PSTE, KDFPPTEPKKDKKKKEETAQDTVIFED, and QTDD…AERS. Low complexity predominate over residues 190–223; that stretch reads RGNSRSSSRNSSRASSRGNSRASSRGASPGRPAA. In terms of domain architecture, CoV N CTD spans 259–376; sequence TKNEAAANAK…ENLNAYKDFP (118 aa). A dimerization region spans residues 270–373; it reads LRHKRTAHKG…ILAENLNAYK (104 aa). Positions 379–390 are enriched in basic and acidic residues; sequence EPKKDKKKKEET. Residues 419 to 436 show a composition bias toward acidic residues; sequence QTDDEWLGGDETVYEDED. Position 451 is a phosphothreonine; by host (threonine 451).

The protein belongs to the betacoronavirus nucleocapsid protein family. Homooligomer. Both monomeric and oligomeric forms interact with RNA. Interacts with protein M. Interacts with NSP3; this interaction serves to tether the genome to the newly translated replicase-transcriptase complex at a very early stage of infection. In terms of processing, ADP-ribosylated. The ADP-ribosylation is retained in the virion during infection. Phosphorylated on serine and threonine residues.

It is found in the virion. The protein localises to the host endoplasmic reticulum-Golgi intermediate compartment. Its subcellular location is the host Golgi apparatus. Packages the positive strand viral genome RNA into a helical ribonucleocapsid (RNP) and plays a fundamental role during virion assembly through its interactions with the viral genome and membrane protein M. Plays an important role in enhancing the efficiency of subgenomic viral RNA transcription as well as viral replication. The polypeptide is Nucleoprotein (Rousettus leschenaultii (Leschenault's rousette)).